Here is a 578-residue protein sequence, read N- to C-terminus: A-type ATP synthase subunit A (578 aa).

228-235 (GPFGSGKT) serves as a coordination point for ATP.

Belongs to the ATPase alpha/beta chains family. In terms of assembly, has multiple subunits with at least A(3), B(3), C, D, E, F, H, I and proteolipid K(x).

The protein resides in the cell membrane. It carries out the reaction ATP + H2O + 4 H(+)(in) = ADP + phosphate + 5 H(+)(out). Its function is as follows. Component of the A-type ATP synthase that produces ATP from ADP in the presence of a proton gradient across the membrane. The A chain is the catalytic subunit. This chain is A-type ATP synthase subunit A, found in Methanosarcina acetivorans (strain ATCC 35395 / DSM 2834 / JCM 12185 / C2A).